A 347-amino-acid polypeptide reads, in one-letter code: NHL repeat-containing protein 3 (347 aa).

Positions 1–22 (MARAWVCLAGAAFFLSCLVLHS) are cleaved as a signal peptide. Residues 47–93 (RLDLGWPKNSEYFTGATFCVAVDSLNGLVYVAQRGDNIPKVLVFSED) form an NHL 1 repeat. A glycan (N-linked (GlcNAc...) asparagine) is linked at Asn101. 2 NHL repeats span residues 150-196 (TPGK…LSQD) and 200-243 (LWLR…FDKD). Residues Asn206 and Asn278 are each glycosylated (N-linked (GlcNAc...) asparagine). The NHL 4 repeat unit spans residues 294–338 (GDCSVVSTIQLADQVLPHLLEVDRKTGAVYVAEIGAKQIQKYIPW).

The sequence is that of NHL repeat-containing protein 3 (Nhlrc3) from Mus musculus (Mouse).